Here is a 725-residue protein sequence, read N- to C-terminus: Ophiobolin F synthase (725 aa).

The tract at residues 1 to 322 (MEYKYSTIVD…RYHADAKFNE (322 aa)) is (7Z)-ophiobola-7,19-dien-3-ol synthase. Mg(2+)-binding residues include Asp93 and Asp97. Substrate is bound at residue Asp93. Positions 93–97 (DDEID) match the DDXXD 1 motif. Substrate-binding positions include 182–185 (RCMD), Asn226, 230–234 (SYEKE), and 313–314 (RY). An NSE/DTE motif is present at residues 226-234 (NDLFSYEKE). The geranylfarnesyl diphosphate synthase stretch occupies residues 323–725 (LQMLRAEHGV…LRMMLELLKV (403 aa)). The disordered stretch occupies residues 362–388 (GVNGVNGKRKRSGEETADDARTNGNGI). A compositionally biased stretch (basic and acidic residues) spans 373–382 (SGEETADDAR). Isopentenyl diphosphate is bound by residues Lys436, Arg439, and His468. The Mg(2+) site is built by Asp475 and Asp479. The DDXXD 2 signature appears at 475-479 (DDIED). Arg484 is a binding site for dimethylallyl diphosphate. Arg485 provides a ligand contact to isopentenyl diphosphate. Dimethylallyl diphosphate contacts are provided by Lys562, Thr563, Gln601, Asn608, Lys618, and Lys628.

It in the N-terminal section; belongs to the terpene synthase family. The protein in the C-terminal section; belongs to the FPP/GGPP synthase family. Mg(2+) is required as a cofactor.

The enzyme catalyses isopentenyl diphosphate + (2E,6E)-farnesyl diphosphate = (2E,6E,10E)-geranylgeranyl diphosphate + diphosphate. It catalyses the reaction isopentenyl diphosphate + (2E,6E,10E)-geranylgeranyl diphosphate = (2E,6E,10E,14E)-geranylfarnesyl diphosphate + diphosphate. It carries out the reaction (2E,6E,10E,14E)-geranylfarnesyl diphosphate + H2O = ophiobolin F + diphosphate. It functions in the pathway secondary metabolite biosynthesis; terpenoid biosynthesis. Functionally, bifunctional sesterterpene synthase that converts isopentenyl diphosphate (IPP) and dimethylallyl diphosphate (DMAPP) into ophiobolin F. The C-terminal prenyltransferase (PT) domain of AcldOS converts isopentenyl diphosphate and dimethylallyl diphosphate into geranylfarnesyl diphosphate (GFPP), whereas the N-terminal terpene cyclase (TC) domain catalyzes the cyclization of GFPP to ophiobolin F. This chain is Ophiobolin F synthase, found in Aspergillus calidoustus.